We begin with the raw amino-acid sequence, 398 residues long: uncharacterized protein (398 aa).

An N-terminal signal peptide occupies residues Met-1–Ala-22. Cys-23 carries N-palmitoyl cysteine lipidation. Cys-23 is lipidated: S-diacylglycerol cysteine.

The protein localises to the cell membrane. This is an uncharacterized protein from Mycoplasma genitalium (strain ATCC 33530 / DSM 19775 / NCTC 10195 / G37) (Mycoplasmoides genitalium).